Reading from the N-terminus, the 386-residue chain is MQLNRKQLKNLHNYKYSAIDNSLLSKYILKPYWWNQLLKVIPMSMAPNLITLIGLGFVVINILTMLVYKYHYEMDAFPSWVYASWAIGLFLYQSFDAIDGSQARRTGTSSPLGQLFDHGVDAINTSFEVLLTIELLQLDMFSSILTQFASLLYFYISTWEEYHTGTLYLSYFSGPVEGIVMVIGLFALTAIKGDSFWLKLHPTPESWGFVRSFLPYYTYGSCLYNFMAFALLLNVLQSLRNALQAVQKNNGSVIKALSGILPYFLQWMAVFSLYAKYPAFFEHHFLTIFCLNAFIFAYSVGVVIVSHITESPFPYWNVLILPFLVDAVDAYTFGVLKNVQTEYFFCYVGICIGVYGNFVAHVIAMITEEYGIKCLTIPSKPESKKN.

Transmembrane regions (helical) follow at residues 48-68, 78-98, 136-156, 171-191, 213-233, 253-273, 285-305, 316-336, and 344-364; these read NLIT…MLVY, PSWV…FDAI, LQLD…YFYI, YFSG…LTAI, FLPY…ALLL, VIKA…VFSL, FLTI…VVIV, WNVL…FGVL, and FFCY…HVIA.

The protein belongs to the CDP-alcohol phosphatidyltransferase class-I family.

The protein localises to the membrane. This is an uncharacterized protein from Schizosaccharomyces pombe (strain 972 / ATCC 24843) (Fission yeast).